Consider the following 823-residue polypeptide: Zygotic DNA replication licensing factor mcm6 (823 aa).

The C4-type zinc finger occupies C159–C186. The MCM domain maps to L347–V554. Residue G397–S404 participates in ATP binding. The Arginine finger signature appears at S529–D532. Residues N666–K713 form a disordered region. Residues L667–Q680 show a composition bias toward acidic residues. Over residues G692 to G702 the composition is skewed to low complexity.

Belongs to the MCM family. As to quaternary structure, component of the mcm2-7 complex (RLF-M). The complex forms a toroidal hexameric ring with the proposed subunit order mcm2-mcm6-mcm4-mcm7-mcm3-mcm5. Begins to associate with zmcm3, mcm4 and mcm7 into mcm complexes at the neurula stage.

The protein resides in the nucleus. It catalyses the reaction ATP + H2O = ADP + phosphate + H(+). In terms of biological role, acts as a component of the mcm2-7 complex (mcm complex) which is the putative replicative helicase essential for 'once per cell cycle' DNA replication initiation and elongation in eukaryotic cells. The active ATPase sites in the mcm2-7 ring are formed through the interaction surfaces of two neighboring subunits such that a critical structure of a conserved arginine finger motif is provided in trans relative to the ATP-binding site of the Walker A box of the adjacent subunit. The six ATPase active sites, however, are likely to contribute differentially to the complex helicase activity. The existence of maternal and zygotic forms of mcm3 and mcm6 suggests that specific forms of mcm2-7 complexes may be used during different stages of development. May replace mmcm6 in the mcm2-7 complex. This chain is Zygotic DNA replication licensing factor mcm6, found in Xenopus tropicalis (Western clawed frog).